Reading from the N-terminus, the 661-residue chain is Transcription factor ccg-8 (661 aa).

Positions 1–11 (MEHHHHHRHMH) are enriched in basic residues. 4 disordered regions span residues 1–69 (MEHH…QADN), 107–243 (SASS…LDDP), 255–279 (LKTD…DQNQ), and 354–398 (RTKS…RRTS). Low complexity-rich tracts occupy residues 23-43 (HQQY…QHQQ) and 107-140 (SASS…SSNR). Over residues 173–187 (DHSLPSIASLNVGSS) the composition is skewed to polar residues. The span at 192–203 (QPTPTPQPPPKF) shows a compositional bias: pro residues. Over residues 357–366 (SSSDTRESGQ) the composition is skewed to basic and acidic residues.

In terms of biological role, transcription factor that plays a pivotal role in azole adaptive responses by regulating the drug accumulation in the cells. Affects the transcriptional responses to ketoconazole of many genes, including the target gene (erg11), an azole transporter gene (cdr4), a hexose transporter gene (hxt13), a stress response gene (kts-1), two transcription factor genes (named kts-2 and fsd-1/ndt80). Also regulates phospholipid synthesis that is not involved in azole resistance. The protein is Transcription factor ccg-8 of Neurospora crassa (strain ATCC 24698 / 74-OR23-1A / CBS 708.71 / DSM 1257 / FGSC 987).